Consider the following 279-residue polypeptide: Non-structural maintenance of chromosomes element 3 homolog (279 aa).

Residues 1-52 (MLQKPRGRGRPSTQADPERDWGGAGEEGPSTSRAAGGSSQGSRASLSAPTVG) form a disordered region. Over residues 30–48 (STSRAAGGSSQGSRASLSA) the composition is skewed to low complexity. Position 38 is a phosphoserine (S38). Residues 52–279 (GPRTQKQLEL…ATASAPATSS (228 aa)) form an interaction with NSMCE1 region. Positions 59 to 259 (LELKVAELVQ…KDWPTQYCEA (201 aa)) constitute an MAGE domain.

In terms of assembly, component of the SMC5-SMC6 complex which consists at least of SMC5, SMC6, NSMCE2, NSMCE1, NSMCE4A or EID3 and NSMCE3. NSMCE1, NSMCE4A or EID3 and NSMCE3 probably form a subcomplex that bridges the head domains of the SMC5:SMC6 heterodimer. Interacts with PJA1. Interacts with E2F1 (via C-terminus). Interacts with NGFR (via C-terminus). Interacts with NSMCE1. Interacts with NSMCE4. Interacts with SMC6. Interacts with EID3. Ubiquitous.

The protein localises to the cytoplasm. Its subcellular location is the nucleus. It localises to the chromosome. The protein resides in the telomere. In terms of biological role, component of the SMC5-SMC6 complex, a complex involved in repair of DNA double-strand breaks by homologous recombination. The complex may promote sister chromatid homologous recombination by recruiting the SMC1-SMC3 cohesin complex to double-strand breaks. The complex is required for telomere maintenance via recombination in ALT (alternative lengthening of telomeres) cell lines and mediates sumoylation of shelterin complex (telosome) components which is proposed to lead to shelterin complex disassembly in ALT-associated PML bodies (APBs). In vitro enhances ubiquitin ligase activity of NSMCE1. Proposed to act through recruitment and/or stabilization of the Ubl-conjugating enzyme (E2) at the E3:substrate complex. May be a growth suppressor that facilitates the entry of the cell into cell cycle arrest. This is Non-structural maintenance of chromosomes element 3 homolog (Nsmce3) from Mus musculus (Mouse).